The following is a 64-amino-acid chain: MVTVKFKYKGEEKEVDISKIKKVWRVGKMISFTYDDNGKTGRGAVSEKDAPKELLQMLEKSGKK.

N6-methyllysine occurs at positions 5 and 7.

The protein belongs to the 7 kDa DNA-binding/endoribonuclease P2 family. As to quaternary structure, monomer.

It localises to the cytoplasm. Can constrain negative DNA supercoils. May be involved in maintaining the integrity of the genome at high temperature. This chain is DNA-binding protein 7, found in Sulfurisphaera tokodaii (strain DSM 16993 / JCM 10545 / NBRC 100140 / 7) (Sulfolobus tokodaii).